The chain runs to 165 residues: Protein SprT (165 aa).

The SprT-like domain occupies 20-163 (EKLAQANLKL…RCVHCGEQLV (144 aa)). His-78 lines the Zn(2+) pocket. Residue Glu-79 is part of the active site. Zn(2+) is bound at residue His-82.

Belongs to the SprT family. Requires Zn(2+) as cofactor.

It localises to the cytoplasm. This is Protein SprT from Escherichia coli (strain K12 / MC4100 / BW2952).